A 365-amino-acid polypeptide reads, in one-letter code: Cobalt-precorrin-5B C(1)-methyltransferase (365 aa).

The protein belongs to the CbiD family.

It carries out the reaction Co-precorrin-5B + S-adenosyl-L-methionine = Co-precorrin-6A + S-adenosyl-L-homocysteine. It functions in the pathway cofactor biosynthesis; adenosylcobalamin biosynthesis; cob(II)yrinate a,c-diamide from sirohydrochlorin (anaerobic route): step 6/10. Catalyzes the methylation of C-1 in cobalt-precorrin-5B to form cobalt-precorrin-6A. This Pseudomonas fluorescens (strain ATCC BAA-477 / NRRL B-23932 / Pf-5) protein is Cobalt-precorrin-5B C(1)-methyltransferase.